A 287-amino-acid chain; its full sequence is uncharacterized protein (287 aa).

This is an uncharacterized protein from Acanthamoeba polyphaga mimivirus (APMV).